The sequence spans 83 residues: uncharacterized protein (83 aa).

Positions 57-83 (ESVEEEEEFEDYDEFEEEEEYYYDDEY) are disordered.

This is an uncharacterized protein from Archaeoglobus fulgidus (strain ATCC 49558 / DSM 4304 / JCM 9628 / NBRC 100126 / VC-16).